The sequence spans 314 residues: Methionyl-tRNA formyltransferase (314 aa).

S110–P113 provides a ligand contact to (6S)-5,6,7,8-tetrahydrofolate.

The protein belongs to the Fmt family.

The enzyme catalyses L-methionyl-tRNA(fMet) + (6R)-10-formyltetrahydrofolate = N-formyl-L-methionyl-tRNA(fMet) + (6S)-5,6,7,8-tetrahydrofolate + H(+). Functionally, attaches a formyl group to the free amino group of methionyl-tRNA(fMet). The formyl group appears to play a dual role in the initiator identity of N-formylmethionyl-tRNA by promoting its recognition by IF2 and preventing the misappropriation of this tRNA by the elongation apparatus. This Bacillus cereus (strain G9842) protein is Methionyl-tRNA formyltransferase.